A 281-amino-acid polypeptide reads, in one-letter code: NAD kinase (281 aa).

D66 acts as the Proton acceptor in catalysis. NAD(+) contacts are provided by residues 66–67 (DG), 137–138 (ND), R148, R165, D167, and 178–183 (TAYSMS).

Belongs to the NAD kinase family. A divalent metal cation is required as a cofactor.

It is found in the cytoplasm. The enzyme catalyses NAD(+) + ATP = ADP + NADP(+) + H(+). Involved in the regulation of the intracellular balance of NAD and NADP, and is a key enzyme in the biosynthesis of NADP. Catalyzes specifically the phosphorylation on 2'-hydroxyl of the adenosine moiety of NAD to yield NADP. The polypeptide is NAD kinase (Chlorobium phaeovibrioides (strain DSM 265 / 1930) (Prosthecochloris vibrioformis (strain DSM 265))).